We begin with the raw amino-acid sequence, 491 residues long: Cytochrome P450 2F3 (491 aa).

Cys436 contributes to the heme binding site.

The protein belongs to the cytochrome P450 family. Requires heme as cofactor. In terms of tissue distribution, lung specific.

Its subcellular location is the endoplasmic reticulum membrane. The protein resides in the microsome membrane. It carries out the reaction an organic molecule + reduced [NADPH--hemoprotein reductase] + O2 = an alcohol + oxidized [NADPH--hemoprotein reductase] + H2O + H(+). Bioactivates 3-methylindole (3MI) by dehydrogenation to the putative electrophile 3-methylene-indolenine. Stereoselectively catalyzes the formation of the 1R,2S-oxide from naphthalene. Lack activity with other common P450 substrates including 7-ethoxycoumarin. The chain is Cytochrome P450 2F3 (CYP2F3) from Capra hircus (Goat).